The chain runs to 1425 residues: Neuropathy target esterase sws (1425 aa).

Residues 1-34 are Lumenal-facing; it reads MDVLEMLRASASGSYNTIFSDAWCQYVSKQITAT. A helical transmembrane segment spans residues 35–55; it reads VYMYFALVMMSLLFIAWFLYF. The Cytoplasmic segment spans residues 56 to 1425; the sequence is KRMARLRLRD…RSSPNNETKN (1370 aa). 174–301 provides a ligand contact to a nucleoside 3',5'-cyclic phosphate; the sequence is IFGHFEKPVF…IRVIQVIMIR (128 aa). Polar residues-rich tracts occupy residues 332-348 and 357-366; these read TMSGPINSQTSQSSRQA and SQMNLMQSAV. The disordered stretch occupies residues 332-410; the sequence is TMSGPINSQT…NPDGSFHGTT (79 aa). Low complexity predominate over residues 367–381; that stretch reads SGTGSSGVSVTVTRP. Residues Ser-444 and Ser-453 each carry the phosphoserine modification. A nucleoside 3',5'-cyclic phosphate-binding positions include 482–609 and 598–727; these read ELGL…VVRR and IVLD…HRFL. The region spanning 952–1118 is the PNPLA domain; sequence LVLGGGGARG…VNNLPADVMH (167 aa). Residues 956-961 carry the GXGXXG motif; that stretch reads GGGARG. The GXSXG motif lies at 983–987; that stretch reads GVSIG. Ser-985 functions as the Nucleophile in the catalytic mechanism. Asp-1105 functions as the Proton acceptor in the catalytic mechanism. Residues 1105-1107 carry the DGA/G motif; sequence DGG. Ser-1160 is modified (phosphoserine). A disordered region spans residues 1330-1425; it reads LERKTDKSTQ…RSSPNNETKN (96 aa). Residues 1337-1347 show a composition bias toward low complexity; it reads STQSSPPSNSR. The segment covering 1348–1358 has biased composition (basic and acidic residues); that stretch reads SDMRGKEEARH. A compositionally biased stretch (low complexity) spans 1380 to 1403; that stretch reads TKTQTGQEQELQQEQQDQGATAEQ. Over residues 1404-1416 the composition is skewed to basic and acidic residues; sequence LVDKDKEENKENR.

It belongs to the NTE family. In terms of assembly, interacts with Pka-C3; interaction inhibits the catalytic function of Pka-C3 and the esterase activity of sws. Isoform A and isoform B are expressed in the entire brain cortex; cortical cell bodies of adult brain. Sws and Pka-C3 are colocalized in all neurons.

The protein localises to the endoplasmic reticulum membrane. The catalysed reaction is a 1-acyl-sn-glycero-3-phosphocholine + H2O = sn-glycerol 3-phosphocholine + a fatty acid + H(+). In terms of biological role, phospholipase B that deacylates intracellular phosphatidylcholine (PtdCho), generating glycerophosphocholine (GroPtdCho). This deacylation occurs at both sn-2 and sn-1 positions of PtdCho. Its specific chemical modification by certain organophosphorus (OP) compounds leads to distal axonopathy. Plays a role in the signaling mechanism between neurons and glia that regulates glia wrapping during development of the adult brain. Essential for membrane lipid homeostasis and cell survival in both neurons and glia of the adult brain. In Drosophila melanogaster (Fruit fly), this protein is Neuropathy target esterase sws (sws).